A 387-amino-acid chain; its full sequence is Chaperone protein DnaJ (387 aa).

The 65-residue stretch at 6–70 folds into the J domain; it reads DYYEILGLSR…EKRAQYDRFG (65 aa). The segment at 130-212 adopts a CR-type zinc-finger fold; the sequence is GVRKDIDVPR…CSGTGRVRNT (83 aa). Zn(2+) is bound by residues cysteine 143, cysteine 146, cysteine 160, cysteine 163, cysteine 186, cysteine 189, cysteine 200, and cysteine 203. CXXCXGXG motif repeat units lie at residues 143–150, 160–167, 186–193, and 200–207; these read CSNCSGTG, CPTCGGTG, CSTCRGKG, and CPVCSGTG. The interval 143-162 is disordered; it reads CSNCSGTGARPGTSPKRCPT.

Belongs to the DnaJ family. In terms of assembly, homodimer. It depends on Zn(2+) as a cofactor.

Its subcellular location is the cytoplasm. In terms of biological role, participates actively in the response to hyperosmotic and heat shock by preventing the aggregation of stress-denatured proteins and by disaggregating proteins, also in an autonomous, DnaK-independent fashion. Unfolded proteins bind initially to DnaJ; upon interaction with the DnaJ-bound protein, DnaK hydrolyzes its bound ATP, resulting in the formation of a stable complex. GrpE releases ADP from DnaK; ATP binding to DnaK triggers the release of the substrate protein, thus completing the reaction cycle. Several rounds of ATP-dependent interactions between DnaJ, DnaK and GrpE are required for fully efficient folding. Also involved, together with DnaK and GrpE, in the DNA replication of plasmids through activation of initiation proteins. This Methanosarcina thermophila protein is Chaperone protein DnaJ.